The chain runs to 161 residues: Inner membrane assembly complex subunit 17 (161 aa).

The N-terminal 22 residues, 1-22, are a transit peptide targeting the mitochondrion; it reads MLNPRPCVPRLLSAVARCHKPY. Residues 23–84 lie on the Mitochondrial matrix side of the membrane; it reads STSIKSLEDL…QQQQQALKKF (62 aa). A helical membrane pass occupies residues 85–107; that stretch reads VRPMWIFLLMSSFFYLTGHYIWW. The Mitochondrial intermembrane segment spans residues 108 to 161; that stretch reads KLEYDEREIELHKQVQALRQELDSAIAAKHSGKEPALSGAGAKKPKRWYLAWLW. A coiled-coil region spans residues 109–138; the sequence is LEYDEREIELHKQVQALRQELDSAIAAKHS.

Belongs to the INA17 family. In terms of assembly, component of the inner membrane assembly (INA) complex, composed of INA17 and INA22. Interacts with a subset of F(1)F(0)-ATP synthase subunits of the F(1)-domain and the peripheral stalk.

It localises to the mitochondrion inner membrane. In terms of biological role, component of the INA complex (INAC) that promotes the biogenesis of mitochondrial F(1)F(0)-ATP synthase. INAC facilitates the assembly of the peripheral stalk and promotes the assembly of the catalytic F(1)-domain with the membrane-embedded F(0)-domain. This is Inner membrane assembly complex subunit 17 from Lachancea thermotolerans (strain ATCC 56472 / CBS 6340 / NRRL Y-8284) (Yeast).